The following is a 275-amino-acid chain: MNALQAEIIAALKTQPTIDPAKEIRRSVDFMKAYLKKNTFLKSYVLGISGGQDSTLVGALTEKAMQEMRAETGDESYQFIAVRLPYGEQADESDAMAAIEFMAADQVKRVNIKGSVDAMVQSLAETGVTVSDFNKGNIKARVRMIAQYGIAGENSGAVLGTDHSAESITGFYTKFGDGGADLVPIFRLNKRQGKAMLAELGAPKHLYEKVPTADLEEDRPALPDELALGVTYDQIDDYLEGRQVSEEAATKIENWHKKTAHKRHLPITIYDTFWQ.

47–54 (GISGGQDS) lines the ATP pocket. Aspartate 53 provides a ligand contact to Mg(2+). Arginine 141 is a deamido-NAD(+) binding site. Threonine 161 lines the ATP pocket. Residue glutamate 166 coordinates Mg(2+). Deamido-NAD(+) is bound by residues lysine 174 and aspartate 181. Lysine 190 and threonine 212 together coordinate ATP. 261–262 (HK) lines the deamido-NAD(+) pocket.

The protein belongs to the NAD synthetase family. In terms of assembly, homodimer.

The enzyme catalyses deamido-NAD(+) + NH4(+) + ATP = AMP + diphosphate + NAD(+) + H(+). Its pathway is cofactor biosynthesis; NAD(+) biosynthesis; NAD(+) from deamido-NAD(+) (ammonia route): step 1/1. Its function is as follows. Catalyzes the ATP-dependent amidation of deamido-NAD to form NAD. Uses ammonia as a nitrogen source. The polypeptide is NH(3)-dependent NAD(+) synthetase (Latilactobacillus sakei subsp. sakei (strain 23K) (Lactobacillus sakei subsp. sakei)).